We begin with the raw amino-acid sequence, 675 residues long: Vitamin K-dependent protein S (675 aa).

Positions 1 to 24 are cleaved as a signal peptide; sequence MRVLSVRFRVLLACLALVLPNSET. The propeptide occupies 25 to 41; the sequence is NFLSKERASQVLVRKRR. Positions 42–87 constitute a Gla domain; sequence ANTLLEETKKGNLERECIEELCNKEEAREVFENNPETDYFYPKYLG. A 4-carboxyglutamate mark is found at Glu-47, Glu-48, Glu-55, Glu-57, Glu-60, Glu-61, Glu-66, Glu-67, Glu-70, Glu-73, and Glu-77. Cys-58 and Cys-63 form a disulfide bridge. The interval 88–116 is thrombin-sensitive; that stretch reads CLGAFRVGAFSAARQSANAYPDLRSCVNA. An EGF-like 1 domain is found at 117-155; it reads IPDQCDPMPCNEDGYLSCKDGQGAFTCICKPGWQGDKCQ. Disulfide bonds link Cys-121–Cys-134, Cys-126–Cys-143, Cys-145–Cys-154, Cys-161–Cys-175, Cys-171–Cys-184, Cys-186–Cys-199, Cys-205–Cys-217, Cys-212–Cys-226, Cys-228–Cys-241, Cys-247–Cys-256, Cys-252–Cys-265, Cys-267–Cys-282, and Cys-449–Cys-475. Asp-136 is modified ((3R)-3-hydroxyaspartate). The region spanning 157–200 is the EGF-like 2; calcium-binding domain; that stretch reads DINECKDPSNINGGCSQTCDNTPGSYHCSCKIGFAMLTNKKDCK. One can recognise an EGF-like 3; calcium-binding domain in the interval 201 to 242; it reads DVDECSLKPSVCGTAVCKNIPGDFECECPNGYRYDPSSKSCK. Residues 243–283 enclose the EGF-like 4; calcium-binding domain; the sequence is DVDECSENTCAQLCVNYPGGYSCYCDGKKGFKLAQDQRSCE. 2 Laminin G-like domains span residues 299-475 and 484-665; these read LLYL…NKHC and YYPG…AHSC. Asn-499 and Asn-509 each carry an N-linked (GlcNAc...) asparagine glycan.

The iron and 2-oxoglutarate dependent 3-hydroxylation of aspartate and asparagine is (R) stereospecific within EGF domains. Plasma.

The protein localises to the secreted. Its function is as follows. Anticoagulant plasma protein; it is a cofactor to activated protein C in the degradation of coagulation factors Va and VIIIa. It helps to prevent coagulation and stimulating fibrinolysis. The polypeptide is Vitamin K-dependent protein S (Pros1) (Rattus norvegicus (Rat)).